The chain runs to 225 residues: Uridylate kinase (225 aa).

9 to 10 (GS) is an ATP binding site. Glycine 46 contacts UMP. The ATP site is built by glycine 47 and arginine 51. Residues aspartate 67 and 115-121 (THPAHTT) each bind UMP. Residues threonine 141, asparagine 142, tyrosine 147, and aspartate 150 each coordinate ATP.

Belongs to the UMP kinase family. In terms of assembly, homohexamer.

Its subcellular location is the cytoplasm. The enzyme catalyses UMP + ATP = UDP + ADP. The protein operates within pyrimidine metabolism; CTP biosynthesis via de novo pathway; UDP from UMP (UMPK route): step 1/1. Its activity is regulated as follows. Inhibited by UTP. In terms of biological role, catalyzes the reversible phosphorylation of UMP to UDP. In Methanococcus maripaludis (strain C6 / ATCC BAA-1332), this protein is Uridylate kinase.